Consider the following 3075-residue polypeptide: Probable polyketide synthase 30 (3075 aa).

Residues 26 to 458 form the Ketosynthase family 3 (KS3) domain; that stretch reads SGDVAVIGIG…GSNVCLILSE (433 aa). Catalysis depends on for beta-ketoacyl synthase activity residues cysteine 198, histidine 337, and histidine 381. The tract at residues 663–696 is acyl/malonyl transferase; it reads GVSADIIIGHSLGEVSSPYCSGMIDFQTLCYLTY. The For acyl/malonyl transferase activity role is filled by serine 673. The N-terminal hotdog fold stretch occupies residues 963-1085; the sequence is GPSINNLGNN…GNFSLTKHNS (123 aa). Residues 963 to 1269 form the PKS/mFAS DH domain; sequence GPSINNLGNN…CALVSLGSNP (307 aa). Catalysis depends on histidine 997, which acts as the Proton acceptor; for dehydratase activity. Positions 1102-1269 are C-terminal hotdog fold; it reads NFTSMSKQDF…CALVSLGSNP (168 aa). Aspartate 1174 functions as the Proton donor; for dehydratase activity in the catalytic mechanism. Residues 2533 to 2610 enclose the Carrier domain; the sequence is DNNEIIRSTI…QSIEIIKSAH (78 aa). Serine 2570 carries the post-translational modification O-(pantetheine 4'-phosphoryl)serine.

The cofactor is pantetheine 4'-phosphate.

Probable polyketide synthase. May be involved in the process of cell migration. The sequence is that of Probable polyketide synthase 30 (pks30) from Dictyostelium discoideum (Social amoeba).